An 842-amino-acid chain; its full sequence is Alanine--tRNA ligase (842 aa).

The Zn(2+) site is built by His549, His553, Cys650, and His654.

Belongs to the class-II aminoacyl-tRNA synthetase family. It depends on Zn(2+) as a cofactor.

It is found in the cytoplasm. It carries out the reaction tRNA(Ala) + L-alanine + ATP = L-alanyl-tRNA(Ala) + AMP + diphosphate. Catalyzes the attachment of alanine to tRNA(Ala) in a two-step reaction: alanine is first activated by ATP to form Ala-AMP and then transferred to the acceptor end of tRNA(Ala). Also edits incorrectly charged Ser-tRNA(Ala) and Gly-tRNA(Ala) via its editing domain. The protein is Alanine--tRNA ligase of Campylobacter jejuni subsp. jejuni serotype O:23/36 (strain 81-176).